A 226-amino-acid chain; its full sequence is Late protein I226R (226 aa).

The N-terminal stretch at 1-16 (MKMETFLVCLFHNAKG) is a signal peptide. Asn164 is a glycosylation site (N-linked (GlcNAc...) asparagine; by host).

It belongs to the asfivirus I226R family.

In terms of biological role, plays a role in the inhibition of host NF-kappa-B and IRF3 signaling pathways. Mechanistically, promotes the degradation of host IKBKG through enhancing its ubiquitination leading to inhibition of both pathways. The protein is Late protein I226R of Ornithodoros (relapsing fever ticks).